A 154-amino-acid chain; its full sequence is 3-hydroxyacyl-[acyl-carrier-protein] dehydratase FabZ (154 aa).

Histidine 57 is a catalytic residue.

The protein belongs to the thioester dehydratase family. FabZ subfamily.

The protein localises to the cytoplasm. It catalyses the reaction a (3R)-hydroxyacyl-[ACP] = a (2E)-enoyl-[ACP] + H2O. Its function is as follows. Involved in unsaturated fatty acids biosynthesis. Catalyzes the dehydration of short chain beta-hydroxyacyl-ACPs and long chain saturated and unsaturated beta-hydroxyacyl-ACPs. The sequence is that of 3-hydroxyacyl-[acyl-carrier-protein] dehydratase FabZ from Sinorhizobium fredii (strain NBRC 101917 / NGR234).